The chain runs to 669 residues: Myb-like protein M (669 aa).

The interval 27–69 is disordered; the sequence is DPSLMDDEFSDNEYDLSPKDDVPSPSKRGRGQIQNGIRRSPNK. Acidic residues predominate over residues 30-40; it reads LMDDEFSDNEY. HTH myb-type domains lie at 60-118 and 119-170; these read QNGI…SPDI and RKGP…SREV. 2 consecutive DNA-binding regions (H-T-H motif) follow at residues 90 to 114 and 142 to 166; these read WKRI…KRVL and WKKI…KSLQ. The Myb-like domain occupies 172-223; that stretch reads WVPKEDEVLVKKVDEMGENLSWLEVSEYLAKLKHTNTLRTALECKTRYLQLT. Disordered stretches follow at residues 226 to 530 and 550 to 636; these read GGSI…EDNG and IKNK…PHQS. Composition is skewed to low complexity over residues 234–382, 389–415, and 450–464; these read NQSN…SSPS, NNNN…NSNN, and PTSL…SSPS. Positions 465–482 are enriched in polar residues; it reads CNNSIRQPSPSPSIKTFK. 3 stretches are compositionally biased toward low complexity: residues 483-521, 555-593, and 611-636; these read STIV…NNDN, NNNN…NSDN, and SNFK…PHQS.

Its subcellular location is the nucleus. The chain is Myb-like protein M (mybM) from Dictyostelium discoideum (Social amoeba).